The primary structure comprises 217 residues: Large ribosomal subunit protein uL3 (217 aa).

This sequence belongs to the universal ribosomal protein uL3 family. Part of the 50S ribosomal subunit. Forms a cluster with proteins L14 and L19.

Its function is as follows. One of the primary rRNA binding proteins, it binds directly near the 3'-end of the 23S rRNA, where it nucleates assembly of the 50S subunit. The sequence is that of Large ribosomal subunit protein uL3 from Mycobacterium ulcerans (strain Agy99).